Consider the following 440-residue polypeptide: R3H and coiled-coil domain-containing protein 1 (440 aa).

The R3H domain occupies 16-81 (NDFVHRIQEE…KRRTVICHQD (66 aa)). Residues 154–225 (TSVLKREAPA…LGPESQSGKG (72 aa)) are disordered. Residues 157 to 168 (LKREAPAGRDPE) show a composition bias toward basic and acidic residues. Ser236 is modified (phosphoserine). The stretch at 242–300 (LEKGKESLLEKRLVAEEEEDEEEVEEDGPSSCSEDDYSELLQEITDNLTKKEIQIEKIH) forms a coiled coil. The disordered stretch occupies residues 254–276 (LVAEEEEDEEEVEEDGPSSCSED). Residues 257-276 (EEEEDEEEVEEDGPSSCSED) are compositionally biased toward acidic residues.

This is R3H and coiled-coil domain-containing protein 1 from Homo sapiens (Human).